We begin with the raw amino-acid sequence, 155 residues long: 3-hydroxyacyl-[acyl-carrier-protein] dehydratase FabZ (155 aa).

Residue His58 is part of the active site.

Belongs to the thioester dehydratase family. FabZ subfamily.

The protein localises to the cytoplasm. It carries out the reaction a (3R)-hydroxyacyl-[ACP] = a (2E)-enoyl-[ACP] + H2O. Involved in unsaturated fatty acids biosynthesis. Catalyzes the dehydration of short chain beta-hydroxyacyl-ACPs and long chain saturated and unsaturated beta-hydroxyacyl-ACPs. In Rhizobium etli (strain CIAT 652), this protein is 3-hydroxyacyl-[acyl-carrier-protein] dehydratase FabZ.